The primary structure comprises 401 residues: Phosphoglycerate kinase (401 aa).

Substrate is bound by residues 20-22, R35, 58-61, R117, and R154; these read DFN and HLGR. ATP is bound by residues K204, G298, E329, and 358–361; that span reads GGDS.

Belongs to the phosphoglycerate kinase family. Monomer.

Its subcellular location is the cytoplasm. It carries out the reaction (2R)-3-phosphoglycerate + ATP = (2R)-3-phospho-glyceroyl phosphate + ADP. It participates in carbohydrate degradation; glycolysis; pyruvate from D-glyceraldehyde 3-phosphate: step 2/5. This Bifidobacterium adolescentis (strain ATCC 15703 / DSM 20083 / NCTC 11814 / E194a) protein is Phosphoglycerate kinase.